A 76-amino-acid chain; its full sequence is Accessory gland-specific peptide 57Dc (76 aa).

The first 20 residues, 1 to 20 (MHGTHFLILLLLCGVLGSNG), serve as a signal peptide directing secretion.

Post-translationally, cAMP-dependent phosphorylation. As to expression, lumen fluid of male accessory glands, becomes seminal fluid.

The protein resides in the secreted. Functionally, transferred from male to female during mating and may affect egglaying and behavior after mating. This is Accessory gland-specific peptide 57Dc (Mst57Dc) from Drosophila melanogaster (Fruit fly).